The following is a 142-amino-acid chain: MAIERTLSIIKPDAVAKNVIGKIYSRFESNGLKVIAARMTWLSEQEAGQFYSVHKERPFFKDLVSFMTSGPVMIQALEGENAIAKNRELMGATDPKKADAGTIRADFAESIDANAVHGSDAPETAAVEIAFFFPGMNTYAGR.

The ATP site is built by lysine 11, phenylalanine 59, arginine 87, threonine 93, arginine 104, and asparagine 114. The active-site Pros-phosphohistidine intermediate is the histidine 117.

Belongs to the NDK family. Homotetramer. Mg(2+) serves as cofactor.

It is found in the cytoplasm. The catalysed reaction is a 2'-deoxyribonucleoside 5'-diphosphate + ATP = a 2'-deoxyribonucleoside 5'-triphosphate + ADP. It catalyses the reaction a ribonucleoside 5'-diphosphate + ATP = a ribonucleoside 5'-triphosphate + ADP. In terms of biological role, major role in the synthesis of nucleoside triphosphates other than ATP. The ATP gamma phosphate is transferred to the NDP beta phosphate via a ping-pong mechanism, using a phosphorylated active-site intermediate. This chain is Nucleoside diphosphate kinase, found in Dechloromonas aromatica (strain RCB).